Here is a 285-residue protein sequence, read N- to C-terminus: Acetylglutamate kinase (285 aa).

Substrate is bound by residues 69-70, Arg91, and Asn183; that span reads GG.

This sequence belongs to the acetylglutamate kinase family. ArgB subfamily.

It localises to the cytoplasm. It catalyses the reaction N-acetyl-L-glutamate + ATP = N-acetyl-L-glutamyl 5-phosphate + ADP. It functions in the pathway amino-acid biosynthesis; L-arginine biosynthesis; N(2)-acetyl-L-ornithine from L-glutamate: step 2/4. Catalyzes the ATP-dependent phosphorylation of N-acetyl-L-glutamate. The polypeptide is Acetylglutamate kinase (Jannaschia sp. (strain CCS1)).